The chain runs to 906 residues: Valine--tRNA ligase (906 aa).

The 'HIGH' region motif lies at 43–53 (PNVTGSLHIGH). The 'KMSKS' region signature appears at 548-552 (KMSKS). Lysine 551 is an ATP binding site. A coiled-coil region spans residues 842–905 (EKARLTKDIA…EAALSRLASV (64 aa)).

Belongs to the class-I aminoacyl-tRNA synthetase family. ValS type 1 subfamily. In terms of assembly, monomer.

The protein localises to the cytoplasm. The enzyme catalyses tRNA(Val) + L-valine + ATP = L-valyl-tRNA(Val) + AMP + diphosphate. Its function is as follows. Catalyzes the attachment of valine to tRNA(Val). As ValRS can inadvertently accommodate and process structurally similar amino acids such as threonine, to avoid such errors, it has a 'posttransfer' editing activity that hydrolyzes mischarged Thr-tRNA(Val) in a tRNA-dependent manner. The polypeptide is Valine--tRNA ligase (Caulobacter vibrioides (strain ATCC 19089 / CIP 103742 / CB 15) (Caulobacter crescentus)).